Consider the following 647-residue polypeptide: Chaperone protein DnaK (647 aa).

Threonine 199 carries the phosphothreonine; by autocatalysis modification. A disordered region spans residues 602–647 (MYAQEQAQAGQQAGPGAGSASAGQSGEKPVEGEVVDAEFEEVKDKK). Low complexity predominate over residues 604–627 (AQEQAQAGQQAGPGAGSASAGQSG).

Belongs to the heat shock protein 70 family.

Functionally, acts as a chaperone. This chain is Chaperone protein DnaK, found in Nitrosomonas eutropha (strain DSM 101675 / C91 / Nm57).